The sequence spans 310 residues: Keratin, type II cytoskeletal 8 (310 aa).

The disordered stretch occupies residues 1–38 (QRTLKVSSSGPRSFSSRSFSSGPSSRISSSSYSRVGSN). K5 is covalently cross-linked (Glycyl lysine isopeptide (Lys-Gly) (interchain with G-Cter in SUMO2)). 4 positions are modified to phosphoserine: S7, S9, S15, and S16. Over residues 7–38 (SSSGPRSFSSRSFSSGPSSRISSSSYSRVGSN) the composition is skewed to low complexity. An Omega-N-methylarginine modification is found at R17. 3 positions are modified to phosphoserine: S18, S21, and S25. Position 26 is an omega-N-methylarginine (R26). S28, S31, and S33 each carry phosphoserine. Residue R34 is modified to Omega-N-methylarginine. S37 carries the post-translational modification Phosphoserine. R42 bears the Asymmetric dimethylarginine; alternate mark. At R42 the chain carries Omega-N-methylarginine; alternate. Residues 92-127 (EKEQIKTLNNKFASFIDKVRFLEQQNKILETKWSFL) are coil 1A. The region spanning 92-310 (EKEQIKTLNN…LRHTKTEISE (219 aa)) is the IF rod domain. K102 carries the post-translational modification N6-malonyllysine. Glycyl lysine isopeptide (Lys-Gly) (interchain with G-Cter in SUMO2) cross-links involve residues K123 and K131. Residues 128–144 (QQQKTSQSNLDGLFEKY) form a linker 1 region. A coil 1B region spans residues 145-236 (ITNLRRQLDS…HLYEEEIKEM (92 aa)). K198 is covalently cross-linked (Glycyl lysine isopeptide (Lys-Gly) (interchain with G-Cter in SUMO1); alternate). A Glycyl lysine isopeptide (Lys-Gly) (interchain with G-Cter in SUMO2); alternate cross-link involves residue K198. An N6-acetyllysine modification is found at K208. Y229 is subject to Phosphotyrosine. Residues 237 to 260 (QSQISDTSVVVSMDNSRSLDLDGI) are linker 12. Phosphoserine occurs at positions 254 and 275. The interval 261-310 (IADVRAQYEEIANRSRAEAETMYQIKYEELQLLAGKHGDDLRHTKTEISE) is coil 2. K286 is covalently cross-linked (Glycyl lysine isopeptide (Lys-Gly) (interchain with G-Cter in SUMO2)). A Glycyl lysine isopeptide (Lys-Gly) (interchain with G-Cter in SUMO2); alternate cross-link involves residue K296. K296 is subject to N6-acetyllysine; alternate. Residue K305 forms a Glycyl lysine isopeptide (Lys-Gly) (interchain with G-Cter in SUMO2) linkage.

Belongs to the intermediate filament family. Heterotetramer of two type I and two type II keratins. Forms a heterodimer with KRT18. Associates with KRT20. Interacts with PNN. When associated with KRT19, interacts with DMD. Interacts with APEX1. Interacts with GPER1. Interacts with EPPK1. Interacts with PKP1 and PKP2. Post-translationally, O-glycosylated. O-GlcNAcylation at multiple sites increases solubility, and decreases stability by inducing proteasomal degradation. O-glycosylated (O-GlcNAcylated), in a cell cycle-dependent manner.

The protein localises to the cytoplasm. The protein resides in the nucleus. It localises to the nucleoplasm. It is found in the nucleus matrix. Functionally, together with KRT19, helps to link the contractile apparatus to dystrophin at the costameres of striated muscle. In Potorous tridactylus (Potoroo), this protein is Keratin, type II cytoskeletal 8.